The sequence spans 256 residues: 3-deoxy-manno-octulosonate cytidylyltransferase (256 aa).

It belongs to the KdsB family.

It is found in the cytoplasm. It carries out the reaction 3-deoxy-alpha-D-manno-oct-2-ulosonate + CTP = CMP-3-deoxy-beta-D-manno-octulosonate + diphosphate. The protein operates within nucleotide-sugar biosynthesis; CMP-3-deoxy-D-manno-octulosonate biosynthesis; CMP-3-deoxy-D-manno-octulosonate from 3-deoxy-D-manno-octulosonate and CTP: step 1/1. It participates in bacterial outer membrane biogenesis; lipopolysaccharide biosynthesis. Its function is as follows. Activates KDO (a required 8-carbon sugar) for incorporation into bacterial lipopolysaccharide in Gram-negative bacteria. This Histophilus somni (strain 2336) (Haemophilus somnus) protein is 3-deoxy-manno-octulosonate cytidylyltransferase.